A 400-amino-acid polypeptide reads, in one-letter code: Argininosuccinate synthase (400 aa).

8–16 (AYSGGLDTS) lines the ATP pocket. Tyrosine 87 and serine 92 together coordinate L-citrulline. Glycine 117 lines the ATP pocket. L-aspartate-binding residues include threonine 119, asparagine 123, and aspartate 124. Asparagine 123 provides a ligand contact to L-citrulline. Residues arginine 127, serine 175, glutamate 259, and tyrosine 271 each contribute to the L-citrulline site.

This sequence belongs to the argininosuccinate synthase family. Type 1 subfamily. In terms of assembly, homotetramer.

It is found in the cytoplasm. It carries out the reaction L-citrulline + L-aspartate + ATP = 2-(N(omega)-L-arginino)succinate + AMP + diphosphate + H(+). It participates in amino-acid biosynthesis; L-arginine biosynthesis; L-arginine from L-ornithine and carbamoyl phosphate: step 2/3. The sequence is that of Argininosuccinate synthase from Frankia alni (strain DSM 45986 / CECT 9034 / ACN14a).